Reading from the N-terminus, the 207-residue chain is Large ribosomal subunit protein uL3c (207 aa).

The tract at residues 128–148 is disordered; that stretch reads FTRGPMTHGSKNHRAPGSIGM.

It belongs to the universal ribosomal protein uL3 family. In terms of assembly, part of the 50S ribosomal subunit.

Its subcellular location is the plastid. The protein localises to the chloroplast. Functionally, one of the primary rRNA binding proteins, it binds directly near the 3'-end of the 23S rRNA, where it nucleates assembly of the 50S subunit. This chain is Large ribosomal subunit protein uL3c (rpl3), found in Trieres chinensis (Marine centric diatom).